Here is a 415-residue protein sequence, read N- to C-terminus: MRRSGPELWKTLTSVSKSGQKKGRRNTRQPVRPLSRFYRIGSSPMKVEFAGLNAPMRLNDESLMTIAEQTEDEIRDLMGGTKKILEERDTGKKKRNREKLHPMERGFSGTQLVGQKLGAPPPVDGVNFDDFETYCLEVKRTSNMTNVFGRVHTMSALVVTGNGRGLAGYAVGKAPIHRTTTAIINGIGMASRKIFHVELHEGRTIYQDFYAECRNTRVFAQRRPRGFGLTCHPRLIKICEAIGIKDIYVKVEGSTKNYLALTHAFVTGLLNQETHQQLAERKGLHVVEMSPSRHFLPQIVASPISTELKTEETLEALDRLNLDDFYGEGRYPLRKPKALPFFSNLEGHLDARWRKHPFRNQESTMIRLIADNMVPRWTRDARAAWAEQRNERMTTGVEPMPLGIGLSHVVPKKDD.

The disordered stretch occupies residues methionine 1–valine 31. The S5 DRBM domain maps to phenylalanine 131 to valine 197. A disordered region spans residues glycine 396–aspartate 415.

The protein belongs to the universal ribosomal protein uS5 family. In terms of assembly, component of the mitochondrial ribosome small subunit (28S) which comprises a 12S rRNA and about 30 distinct proteins.

It is found in the mitochondrion. This Caenorhabditis briggsae protein is Small ribosomal subunit protein uS5m (mrps-5).